A 252-amino-acid chain; its full sequence is Hydroxyacylglutathione hydrolase (252 aa).

Residues histidine 54, histidine 56, aspartate 58, histidine 59, histidine 111, aspartate 128, and histidine 166 each coordinate Zn(2+).

The protein belongs to the metallo-beta-lactamase superfamily. Glyoxalase II family. As to quaternary structure, monomer. The cofactor is Zn(2+).

The enzyme catalyses an S-(2-hydroxyacyl)glutathione + H2O = a 2-hydroxy carboxylate + glutathione + H(+). The protein operates within secondary metabolite metabolism; methylglyoxal degradation; (R)-lactate from methylglyoxal: step 2/2. In terms of biological role, thiolesterase that catalyzes the hydrolysis of S-D-lactoyl-glutathione to form glutathione and D-lactic acid. This chain is Hydroxyacylglutathione hydrolase, found in Photobacterium profundum (strain SS9).